The following is a 1788-amino-acid chain: Glutamine and serine-rich protein 1 (1788 aa).

The span at Met1 to Ala53 shows a compositional bias: low complexity. Disordered stretches follow at residues Met1–Gln69, Thr472–Thr498, and Ser532–Asp617. Composition is skewed to polar residues over residues Pro60 to Gln69, Val478 to Leu492, Ser532 to Pro569, and Val576 to Pro594. Ser670 and Ser940 each carry phosphoserine. Thr1003 carries the phosphothreonine modification. Ser1041 is modified (phosphoserine). Disordered regions lie at residues Gln1104 to Tyr1163 and Ile1234 to Ser1264. Lys1112 participates in a covalent cross-link: Glycyl lysine isopeptide (Lys-Gly) (interchain with G-Cter in SUMO2). A compositionally biased stretch (basic and acidic residues) spans Pro1126–Gly1136. Lys1137 participates in a covalent cross-link: Glycyl lysine isopeptide (Lys-Gly) (interchain with G-Cter in SUMO2). 3 positions are modified to phosphoserine: Ser1262, Ser1281, and Ser1282. Position 1394 is a phosphothreonine (Thr1394). The residue at position 1401 (Ser1401) is a Phosphoserine. Residues Val1494–Ser1588 are disordered. Residues Ile1510 to Lys1537 show a composition bias toward low complexity. The segment covering Ile1545–Phe1561 has biased composition (basic and acidic residues). Residues Ser1562 to Ser1575 are compositionally biased toward low complexity.

As to quaternary structure, interacts with TET1.

It localises to the chromosome. Its function is as follows. Plays an essential role in the protection and maintenance of transcriptional and developmental programs. Protects many bivalent promoters and poised enhancers from hypermethylation, showing a marked preference for these regulatory elements over other types of promoters or enhancers. Mechanistically, cooperates with TET1 and binds to DNA in a common complex to inhibit the binding of DNMT3A/3B and therefore de novo methylation. In Mus musculus (Mouse), this protein is Glutamine and serine-rich protein 1.